We begin with the raw amino-acid sequence, 279 residues long: Ribonuclease Z (279 aa).

Positions 64, 66, 68, 69, 134, 191, and 245 each coordinate Zn(2+). Catalysis depends on D68, which acts as the Proton acceptor.

This sequence belongs to the RNase Z family. Homodimer. The cofactor is Zn(2+).

It catalyses the reaction Endonucleolytic cleavage of RNA, removing extra 3' nucleotides from tRNA precursor, generating 3' termini of tRNAs. A 3'-hydroxy group is left at the tRNA terminus and a 5'-phosphoryl group is left at the trailer molecule.. Functionally, zinc phosphodiesterase, which displays some tRNA 3'-processing endonuclease activity. Probably involved in tRNA maturation, by removing a 3'-trailer from precursor tRNA. The polypeptide is Ribonuclease Z (Methanopyrus kandleri (strain AV19 / DSM 6324 / JCM 9639 / NBRC 100938)).